We begin with the raw amino-acid sequence, 235 residues long: Hydroxyacylglutathione hydrolase (235 aa).

Zn(2+) is bound by residues His-53, His-55, Asp-57, His-58, His-109, Asp-127, and His-165.

The protein belongs to the metallo-beta-lactamase superfamily. Glyoxalase II family. Monomer. Zn(2+) serves as cofactor.

It catalyses the reaction an S-(2-hydroxyacyl)glutathione + H2O = a 2-hydroxy carboxylate + glutathione + H(+). The protein operates within secondary metabolite metabolism; methylglyoxal degradation; (R)-lactate from methylglyoxal: step 2/2. Thiolesterase that catalyzes the hydrolysis of S-D-lactoyl-glutathione to form glutathione and D-lactic acid. This Actinobacillus pleuropneumoniae serotype 7 (strain AP76) protein is Hydroxyacylglutathione hydrolase.